Reading from the N-terminus, the 330-residue chain is Succinylglutamate desuccinylase (330 aa).

Zn(2+) contacts are provided by H53, E56, and H147. E210 is a catalytic residue.

It belongs to the AspA/AstE family. Succinylglutamate desuccinylase subfamily. The cofactor is Zn(2+).

It catalyses the reaction N-succinyl-L-glutamate + H2O = L-glutamate + succinate. Its pathway is amino-acid degradation; L-arginine degradation via AST pathway; L-glutamate and succinate from L-arginine: step 5/5. Transforms N(2)-succinylglutamate into succinate and glutamate. This is Succinylglutamate desuccinylase from Yersinia pseudotuberculosis serotype O:3 (strain YPIII).